Reading from the N-terminus, the 168-residue chain is Ribosome maturation factor RimM (168 aa).

The 73-residue stretch at 96-168 folds into the PRC barrel domain; sequence EGDYYWTDLI…IIVVEWDADF (73 aa).

It belongs to the RimM family. In terms of assembly, binds ribosomal protein uS19.

It is found in the cytoplasm. An accessory protein needed during the final step in the assembly of 30S ribosomal subunit, possibly for assembly of the head region. Essential for efficient processing of 16S rRNA. May be needed both before and after RbfA during the maturation of 16S rRNA. It has affinity for free ribosomal 30S subunits but not for 70S ribosomes. This is Ribosome maturation factor RimM from Coxiella burnetii (strain RSA 331 / Henzerling II).